The primary structure comprises 292 residues: uncharacterized protein (292 aa).

Residues 13-35 form a helical membrane-spanning segment; that stretch reads LFILFIIVVCIYLLPRVAINAFY.

It belongs to the serine esterase family.

The protein localises to the membrane. This is an uncharacterized protein from Salmonella typhimurium (strain LT2 / SGSC1412 / ATCC 700720).